The following is a 485-amino-acid chain: MNAPVNLSSDAHKAVMNDVLQRQKAAHLRDGPPSAEKRIQWLNRCIDLLVGHQAEIAKAVNQDFGSRSPEATSLTDVAGSIGPLKHAREHLTKWMKPEKHKTTPAILGLFGAKATVQWQPKGVVGVISPWNFPVNLTFAPLAGVFAAGNRAMIKPSEFTPATSDLLKAMFAKAFNEEEVAVFVGGPEVGQAFSGLAFDHLVFTGATSVAKHVMRAAAENLVPVTLELGGKSPVILSRGADMATAAARVMNGKTLNAGQICLAPDYVLAPQEDVEAFVKEAQAAVSRYFPTIKDNPDYTAVVAQRHYDRVKGYVDDARAKGARVIEINPAGEDLSQQEHRKIPPTLILDPTDDMKVMQEEIFGPVLPVKGYKTVDEAVDYVNAHDRPLALYWFGTDEAEKDRVLERTTSGGVTVNDVIFHVAQENLPFGGIGPAGMGAYHGYDGFREFSHRKAVFQQLKKDIAPMLGLRPPYGEGIRKYLAGQIKK.

Catalysis depends on residues Glu226 and Cys260.

The protein belongs to the aldehyde dehydrogenase family.

It carries out the reaction (E)-coniferaldehyde + NADP(+) + H2O = (E)-ferulate + NADPH + 2 H(+). The catalysed reaction is (E)-coniferaldehyde + NAD(+) + H2O = (E)-ferulate + NADH + 2 H(+). This chain is Probable coniferyl aldehyde dehydrogenase (calB), found in Caulobacter vibrioides (strain ATCC 19089 / CIP 103742 / CB 15) (Caulobacter crescentus).